The sequence spans 365 residues: Serine/threonine-protein phosphatase 2A activator 1 (365 aa).

The disordered stretch occupies residues 321 to 349 (YEAPSETSEKPAAGTAHTTTTTMPPPRMT). The span at 331–342 (PAAGTAHTTTTT) shows a compositional bias: low complexity.

It belongs to the PTPA-type PPIase family.

The protein resides in the cytoplasm. Its subcellular location is the nucleus. It catalyses the reaction [protein]-peptidylproline (omega=180) = [protein]-peptidylproline (omega=0). In terms of biological role, PPIases accelerate the folding of proteins. It catalyzes the cis-trans isomerization of proline imidic peptide bonds in oligopeptides. Acts as a regulatory subunit for PP2A-like phosphatases modulating their activity or substrate specificity, probably by inducing a conformational change in the catalytic subunit, a direct target of the PPIase. Can reactivate inactive phosphatase PP2A-phosphatase methylesterase complexes (PP2Ai) in presence of ATP and Mg(2+) by dissociating the inactive form from the complex. This is Serine/threonine-protein phosphatase 2A activator 1 (RRD1) from Eremothecium gossypii (strain ATCC 10895 / CBS 109.51 / FGSC 9923 / NRRL Y-1056) (Yeast).